Consider the following 185-residue polypeptide: MKTAQELRVGNVVMIGNDAWVVSKTEYNKSGRNAAVVKMKLKNLLNGGGQESVYKADDKFEVVVLDRKEVTYSYFADPMYVFMDADYNQYEVEAEMMGDALNYLEDGMACEVVFYNEKAISVELPTILVREITYTEPAVKGDTSSGKVLKNAKLATGFELQVPLFCNTGDKIEIDTRTNEYRSRA.

Belongs to the elongation factor P family.

Its subcellular location is the cytoplasm. The protein operates within protein biosynthesis; polypeptide chain elongation. Its function is as follows. Involved in peptide bond synthesis. Stimulates efficient translation and peptide-bond synthesis on native or reconstituted 70S ribosomes in vitro. Probably functions indirectly by altering the affinity of the ribosome for aminoacyl-tRNA, thus increasing their reactivity as acceptors for peptidyl transferase. This chain is Elongation factor P, found in Burkholderia mallei (strain NCTC 10247).